We begin with the raw amino-acid sequence, 430 residues long: Trigger factor (430 aa).

Residues Gly-163–Pro-248 enclose the PPIase FKBP-type domain.

The protein belongs to the FKBP-type PPIase family. Tig subfamily.

The protein resides in the cytoplasm. The enzyme catalyses [protein]-peptidylproline (omega=180) = [protein]-peptidylproline (omega=0). In terms of biological role, involved in protein export. Acts as a chaperone by maintaining the newly synthesized protein in an open conformation. Functions as a peptidyl-prolyl cis-trans isomerase. In Clostridium botulinum (strain Kyoto / Type A2), this protein is Trigger factor.